The following is a 932-amino-acid chain: RNA-binding protein 12 (932 aa).

Residues 96–116 (DIPPANASRSGPPPSSGMSSR) form a disordered region. The segment covering 98-116 (PPANASRSGPPPSSGMSSR) has biased composition (low complexity). The RRM 1 domain maps to 304–379 (LYVSVHGMPF…RYVEVSPATE (76 aa)). S352 and S375 each carry phosphoserine. Polar residues-rich tracts occupy residues 392 to 401 (KQNMGPSGQT) and 408 to 417 (LPRSKSPSGQ). The disordered stretch occupies residues 392–424 (KQNMGPSGQTHPPPQTLPRSKSPSGQKRSRSRS). S420, S422, and S424 each carry phosphoserine. An RRM 2 domain is found at 430–507 (FCVYLKGLPF…RFIQVHPITK (78 aa)). At S525 the chain carries Phosphoserine. Residues 717–734 (NGPPFNFPGNFGGSNAFG) show a composition bias toward low complexity. The interval 717-853 (NGPPFNFPGN…PGFASSSGKP (137 aa)) is disordered. Residues 783–811 (SGFGGGPQNFGNGPGSLGGPPGFGSGPPG) are compositionally biased toward gly residues. Over residues 824-836 (AFGPGPGPGPGPG) the composition is skewed to pro residues. Residues 856-932 (TVIKVQNMPF…GSRKVKLVLG (77 aa)) enclose the RRM 3 domain.

The protein localises to the nucleus. The protein is RNA-binding protein 12 (RBM12) of Homo sapiens (Human).